We begin with the raw amino-acid sequence, 111 residues long: Protein RnfH (111 aa).

Positions 88–111 (RRRRVQKTRESGTREGQKWLRGGA) are disordered. The segment covering 94–105 (KTRESGTREGQK) has biased composition (basic and acidic residues).

This sequence belongs to the UPF0125 (RnfH) family.

In Cupriavidus pinatubonensis (strain JMP 134 / LMG 1197) (Cupriavidus necator (strain JMP 134)), this protein is Protein RnfH.